Here is a 173-residue protein sequence, read N- to C-terminus: Succinate dehydrogenase assembly factor 3, mitochondrial (173 aa).

The transit peptide at 1-59 directs the protein to the mitochondrion; sequence MFRPSTSLALRSTLRQLASASNQPIPPGSEINAVKRTVATILPPIRLYRRIIRAHRRLD. A disordered region spans residues 149 to 173; that stretch reads FPPEKQRELAEKAAADAGLSVKKDE. The segment covering 152 to 162 has biased composition (basic and acidic residues); sequence EKQRELAEKAA.

Belongs to the complex I LYR family. SDHAF3 subfamily. In terms of assembly, interacts with the iron-sulfur protein subunit within the SDH catalytic dimer.

It is found in the mitochondrion matrix. Functionally, plays an essential role in the assembly of succinate dehydrogenase (SDH), an enzyme complex (also referred to as respiratory complex II) that is a component of both the tricarboxylic acid (TCA) cycle and the mitochondrial electron transport chain, and which couples the oxidation of succinate to fumarate with the reduction of ubiquinone (coenzyme Q) to ubiquinol. Promotes maturation of the iron-sulfur protein subunit of the SDH catalytic dimer, protecting it from the deleterious effects of oxidants. May act together with SDHAF1. This is Succinate dehydrogenase assembly factor 3, mitochondrial from Mycosarcoma maydis (Corn smut fungus).